Reading from the N-terminus, the 245-residue chain is tRNA1(Val) (adenine(37)-N6)-methyltransferase (245 aa).

Belongs to the methyltransferase superfamily. tRNA (adenine-N(6)-)-methyltransferase family.

Its subcellular location is the cytoplasm. It carries out the reaction adenosine(37) in tRNA1(Val) + S-adenosyl-L-methionine = N(6)-methyladenosine(37) in tRNA1(Val) + S-adenosyl-L-homocysteine + H(+). Its function is as follows. Specifically methylates the adenine in position 37 of tRNA(1)(Val) (anticodon cmo5UAC). The chain is tRNA1(Val) (adenine(37)-N6)-methyltransferase from Escherichia coli (strain SE11).